A 778-amino-acid polypeptide reads, in one-letter code: METFFIETLASDVYGKALNVDLDRLSQAQVKYTLQELISYCSALTILHYDYSTLAARLSVYQLHQSTASSFSKAVRLQAAQSCSRLSPQFVDVVYKYKAIFDSYIDYNRDYKLSLLGIETMKNSYLLKNKDGVIMERPQDAYMRVAIMIYGMGKVVNIKMILLTYDLLSRHVITHASPTMFNAGTKKPQLSSCFLLNVNDNLENLYDMVKTAGIISGGGGGIGLCLSGIRAKNSFISGSGLRSNGIQNYIMLQNASQCYANQGGLRPGAYAVYLELWHQDIFTFLQMPRLKGQMAEQRLNAPNLKYGLWVPDLFMEILEDQIHNRGDGTWYLFSPDQAPNLHKVFDLERSQHENAHREFKKLYYQYVAEKRYTGVTTAKEIIKEWFKTVIQVGNPYIGFKDAINRKSNLSHVGTITNSNLCIEVTIPCWEGDKAEQGVCNLAAVNLAAFIRENGYDYRGLIEASGNVTENLDNIIDNGYYPTEATRRSNMRHRPIGIGVFGLADVFASLKMKFGSPEAIAMDEAIHAALYYGAMRRSIELAKEKGSHPSFPGSAASKGLLQPDLWVRCGDLSSSWEERVAQTTQGVLTRKSWWQLRLAAMQGVRNGYLTALMPTATSSNSTGKNECFEPFTSNLYTRRTLSGEFIVLNKYLIDDLKEIDLWTEAIQQQLLNAGGSIQHILDIPAEIRDRYKTSREMNQKILTKHAAARNPFVSQSMSLNYYFYEPELSQVLTVLVLGWKKGLTTGSYYCHFSPGAGTQKKIIRNSEKACNADCEACLL.

Substrate is bound by residues Ser177, 192-193 (SC), Gly221, 419-423 (NLCIE), and 613-617 (PTATS). The cysteines at positions 193 and 439 are disulfide-linked. The Proton acceptor role is filled by Asn419. Catalysis depends on Cys421, which acts as the Cysteine radical intermediate. Catalysis depends on Glu423, which acts as the Proton acceptor.

This sequence belongs to the ribonucleoside diphosphate reductase large chain family. Heterotetramer composed of a homodimer of the large subunit (R1) and a homodimer of the small subunit (R2). Larger multisubunit protein complex are also active, composed of (R1)n(R2)n.

The enzyme catalyses a 2'-deoxyribonucleoside 5'-diphosphate + [thioredoxin]-disulfide + H2O = a ribonucleoside 5'-diphosphate + [thioredoxin]-dithiol. With respect to regulation, under complex allosteric control mediated by deoxynucleoside triphosphates and ATP binding. The type of nucleotide bound at the specificity site determines substrate preference. It seems probable that ATP makes the enzyme reduce CDP and UDP, dGTP favors ADP reduction and dTTP favors GDP reduction. Functionally, ribonucleoside-diphosphate reductase holoenzyme provides the precursors necessary for viral DNA synthesis. Allows virus growth in non-dividing cells. Catalyzes the biosynthesis of deoxyribonucleotides from the corresponding ribonucleotides. The polypeptide is Ribonucleoside-diphosphate reductase large subunit (Ornithodoros (relapsing fever ticks)).